A 263-amino-acid polypeptide reads, in one-letter code: Endonuclease 8 (263 aa).

Residue Pro2 is the Schiff-base intermediate with DNA of the active site. Glu3 acts as the Proton donor in catalysis. The Proton donor; for beta-elimination activity role is filled by Lys53. DNA is bound by residues Gln70, Arg125, and Asn169. The segment at 229–263 (KVFHRDGELCERCGGIIEKTTLSSRPFYWCPGCQH) adopts an FPG-type zinc-finger fold. The active-site Proton donor; for delta-elimination activity is Arg253.

Belongs to the FPG family. Zn(2+) is required as a cofactor.

It catalyses the reaction 2'-deoxyribonucleotide-(2'-deoxyribose 5'-phosphate)-2'-deoxyribonucleotide-DNA = a 3'-end 2'-deoxyribonucleotide-(2,3-dehydro-2,3-deoxyribose 5'-phosphate)-DNA + a 5'-end 5'-phospho-2'-deoxyribonucleoside-DNA + H(+). Involved in base excision repair of DNA damaged by oxidation or by mutagenic agents. Acts as a DNA glycosylase that recognizes and removes damaged bases. Has a preference for oxidized pyrimidines, such as thymine glycol, 5,6-dihydrouracil and 5,6-dihydrothymine. Has AP (apurinic/apyrimidinic) lyase activity and introduces nicks in the DNA strand. Cleaves the DNA backbone by beta-delta elimination to generate a single-strand break at the site of the removed base with both 3'- and 5'-phosphates. The protein is Endonuclease 8 of Escherichia coli (strain 55989 / EAEC).